We begin with the raw amino-acid sequence, 265 residues long: Short-chain dehydrogenase/reductase GME11373 (265 aa).

The NADP(+) site is built by isoleucine 26, aspartate 72, asparagine 99, and arginine 132. Catalysis depends on proton donor residues serine 148 and serine 149. Residues tyrosine 163, lysine 167, and threonine 198 each contribute to the NADP(+) site. The Proton acceptor role is filled by tyrosine 163. Residue lysine 167 is the Lowers pKa of active site Tyr of the active site.

This sequence belongs to the short-chain dehydrogenases/reductases (SDR) family.

Its pathway is secondary metabolite biosynthesis. In terms of biological role, short-chain dehydrogenase/reductase; part of the gene cluster that mediates the biosynthesis of dibenzodioxocinones such as pestalotiollide B, a novel class of inhibitors against cholesterol ester transfer protein (CEPT). The biosynthesis initiates from condensation of acetate and malonate units catalyzed by the non-reducing PKS pks8/GME11356. Pks8/GME11356 lacks a thioesterase (TE) domain, which is important to the cyclizing of the third ring of atrochrysone carboxylic acid, and the esterase GME11355 might play the role of TE and catalyzes the cyclization reaction of the C ring. The lactamase-like protein GME11357 (or other beta-lactamases in Pestalotiopsis microspora) probably hydrolyzes the thioester bond between the ACP of pks8/GME11356 and the intermediate to release atrochrysone carboxylic acid, which is spontaneously dehydrates to form endocrocin anthrone. Endocrocin anthrone is further converted to emodin via the endocrocin intermediate. Emodin is then oxidized by several enzymes such as the Baeyer-Villiger oxidase GME11358, the oxidoreductase GME11367, the short chain dehydrogenase/reductase GME11373, as well as by other oxidoreductases from the cluster, to modify the A and C rings and open the B ring, and finally yield monodictyphenone. The prenyltransferase GME11375 may catalyze the addition reaction between the C5 side chains and the carbon bone of dibenzodioxocinones. The remaining biochemical reactions to the final product dibenzodioxocinones should be methylation catalyzed by methyltransferase GME11366 and reduction and lactonization reaction catalyzed by a series of oxidordeuctases. The protein is Short-chain dehydrogenase/reductase GME11373 of Pestalotiopsis microspora.